Consider the following 174-residue polypeptide: NADH-quinone oxidoreductase subunit B (174 aa).

4 residues coordinate [4Fe-4S] cluster: C51, C52, C116, and C146.

Belongs to the complex I 20 kDa subunit family. NDH-1 is composed of 14 different subunits. Subunits NuoB, C, D, E, F, and G constitute the peripheral sector of the complex. It depends on [4Fe-4S] cluster as a cofactor.

The protein resides in the cell inner membrane. The enzyme catalyses a quinone + NADH + 5 H(+)(in) = a quinol + NAD(+) + 4 H(+)(out). Functionally, NDH-1 shuttles electrons from NADH, via FMN and iron-sulfur (Fe-S) centers, to quinones in the respiratory chain. The immediate electron acceptor for the enzyme in this species is believed to be ubiquinone. Couples the redox reaction to proton translocation (for every two electrons transferred, four hydrogen ions are translocated across the cytoplasmic membrane), and thus conserves the redox energy in a proton gradient. The sequence is that of NADH-quinone oxidoreductase subunit B from Anaplasma phagocytophilum (strain HZ).